Here is a 119-residue protein sequence, read N- to C-terminus: Large ribosomal subunit protein bL20 (119 aa).

This sequence belongs to the bacterial ribosomal protein bL20 family.

Binds directly to 23S ribosomal RNA and is necessary for the in vitro assembly process of the 50S ribosomal subunit. It is not involved in the protein synthesizing functions of that subunit. The protein is Large ribosomal subunit protein bL20 of Rhodopseudomonas palustris (strain BisB5).